The sequence spans 449 residues: UDP-N-acetylmuramoylalanine--D-glutamate ligase (449 aa).

Position 118-124 (118-124) interacts with ATP; the sequence is GTNGKTT.

The protein belongs to the MurCDEF family.

It is found in the cytoplasm. The catalysed reaction is UDP-N-acetyl-alpha-D-muramoyl-L-alanine + D-glutamate + ATP = UDP-N-acetyl-alpha-D-muramoyl-L-alanyl-D-glutamate + ADP + phosphate + H(+). The protein operates within cell wall biogenesis; peptidoglycan biosynthesis. In terms of biological role, cell wall formation. Catalyzes the addition of glutamate to the nucleotide precursor UDP-N-acetylmuramoyl-L-alanine (UMA). The chain is UDP-N-acetylmuramoylalanine--D-glutamate ligase from Staphylococcus saprophyticus subsp. saprophyticus (strain ATCC 15305 / DSM 20229 / NCIMB 8711 / NCTC 7292 / S-41).